We begin with the raw amino-acid sequence, 955 residues long: Glycine dehydrogenase (decarboxylating) (955 aa).

Lysine 705 is modified (N6-(pyridoxal phosphate)lysine).

It belongs to the GcvP family. In terms of assembly, the glycine cleavage system is composed of four proteins: P, T, L and H. Requires pyridoxal 5'-phosphate as cofactor.

The enzyme catalyses N(6)-[(R)-lipoyl]-L-lysyl-[glycine-cleavage complex H protein] + glycine + H(+) = N(6)-[(R)-S(8)-aminomethyldihydrolipoyl]-L-lysyl-[glycine-cleavage complex H protein] + CO2. Functionally, the glycine cleavage system catalyzes the degradation of glycine. The P protein binds the alpha-amino group of glycine through its pyridoxal phosphate cofactor; CO(2) is released and the remaining methylamine moiety is then transferred to the lipoamide cofactor of the H protein. This chain is Glycine dehydrogenase (decarboxylating), found in Aliivibrio salmonicida (strain LFI1238) (Vibrio salmonicida (strain LFI1238)).